The chain runs to 337 residues: Glutaminase-asparaginase (337 aa).

Residues 10 to 337 (ANVVILATGG…KELQRIFWEY (328 aa)) enclose the Asparaginase/glutaminase domain. Thr20 (acyl-ester intermediate) is an active-site residue. Substrate contacts are provided by residues Ser67 and 100-101 (TD).

The protein belongs to the asparaginase 1 family. In terms of assembly, homotetramer.

Its subcellular location is the periplasm. It carries out the reaction L-glutamine + H2O = L-glutamate + NH4(+). The catalysed reaction is L-asparagine + H2O = L-aspartate + NH4(+). The polypeptide is Glutaminase-asparaginase (ansB) (Pseudomonas sp. (strain ATCC 29598 / 7A)).